Consider the following 898-residue polypeptide: Sodium/hydrogen exchanger 5 (898 aa).

Topologically, residues 1-48 are cytoplasmic; the sequence is MLSAALLLLPGLPLAGAGATEEPTQESGPLGEPPPGLALFRWQWHEVE. A helical transmembrane segment spans residues 49–69; sequence APYLVALWILVASLAKIVFHL. The Extracellular portion of the chain corresponds to 70 to 76; sequence SRKVTSL. The chain crosses the membrane as a helical span at residues 77-97; that stretch reads VPESCLLILLGLVLGGIVLAV. At 98-106 the chain is on the cytoplasmic side; it reads AKKAEYQLE. The chain crosses the membrane as a helical span at residues 107 to 127; it reads PGTFFLFLLPPIVLDSGYFMP. At 128–137 the chain is on the extracellular side; sequence SRLFFDNLGA. The chain crosses the membrane as a helical span at residues 138–158; the sequence is ILTYAVVGTLWNAFTTGVALW. Residues 159–176 are Cytoplasmic-facing; that stretch reads GLQQAGLVAPRVQAGLLD. The helical transmembrane segment at 177 to 197 threads the bilayer; the sequence is FLLFGSLISAVDPVAVLAVFE. Residues 198–203 are Extracellular-facing; that stretch reads EVHVNQ. A helical transmembrane segment spans residues 204-224; it reads TLFIIIFGESLLNDAVTVVLY. The Cytoplasmic portion of the chain corresponds to 225 to 249; that stretch reads KVCNSFVEMGSANVQATDYLKGVAS. The chain crosses the membrane as a helical span at residues 250-270; sequence LFVVSLGGAAVGLVFAFLLAL. The Extracellular segment spans residues 271-279; it reads TTRFTKRVR. A helical transmembrane segment spans residues 280-300; it reads IIEPLLVFLLAYAAYLTAEMA. Over 301-334 the chain is Cytoplasmic; sequence SLSAILAVTMCGLGCKKYVEANISHKSRTAVKYT. Residues 335 to 355 traverse the membrane as a helical segment; it reads MKTLASCAETVIFMLLGISAV. Residues 356-363 lie on the Extracellular side of the membrane; it reads DSSKWAWD. The helical transmembrane segment at 364 to 384 threads the bilayer; it reads SGLVLGTLFFILFFRALGVVL. The Cytoplasmic portion of the chain corresponds to 385–401; it reads QTWALNQFRLVPLDKID. Residues 402–422 form a helical membrane-spanning segment; sequence QVVMSYGGLRGAVAFALVILL. Topologically, residues 423-431 are extracellular; it reads DRTKVPAKD. A helical transmembrane segment spans residues 432 to 452; it reads YFVATTIVVVFFTVIVQGLTI. Over 453–898 the chain is Cytoplasmic; it reads KPLVKWLRVK…CIQFNRGGRL (446 aa). Disordered stretches follow at residues 660-693 and 826-866; these read FTKS…RDLG and EEPQ…PQQE. The segment covering 663–675 has biased composition (basic residues); it reads SKPRPRKTSHKKK. Over residues 857 to 866 the composition is skewed to polar residues; it reads ESSADIPQQE.

This sequence belongs to the monovalent cation:proton antiporter 1 (CPA1) transporter (TC 2.A.36) family. In terms of assembly, interacts with CHP1 and CHP2. Interacts with ARRB2; facilitates the endocytosis of SLC9A5 from the plasma membrane. Interacts with RACK1; this interaction positively regulates SLC9A5 activity and promote SLC9A5 localization to focal adhesions. Interacts with SCAMP2; this interaction regulates SLC9A5 cell-surface targeting and SLC9A5 activity. Post-translationally, phosphorylated by PRKAA2; promotes its accumulation at the cell surface. Phosphorylated by CSNK2A1 in a manner favoring its beta-arrestin binding and endocytosis. As to expression, highest expression level is detected in brain. Expressed in hippocampal neurons (at protein level).

The protein resides in the cell membrane. It is found in the recycling endosome membrane. It localises to the cell projection. The protein localises to the dendritic spine membrane. Its subcellular location is the synaptic cell membrane. The protein resides in the cell junction. It is found in the focal adhesion. It catalyses the reaction Na(+)(in) + H(+)(out) = Na(+)(out) + H(+)(in). Functionally, plasma membrane Na(+)/H(+) antiporter. Mediates the electroneutral exchange of intracellular H(+) ions for extracellular Na(+) in 1:1 stoichiometry. Responsible for regulating intracellular pH homeostasis, in particular in neural tissues. Acts as a negative regulator of dendritic spine growth. Plays a role in postsynaptic remodeling and signaling. Can also contribute to organellar pH regulation, with consequences for receptor tyrosine kinase trafficking. This chain is Sodium/hydrogen exchanger 5 (Slc9a5), found in Mus musculus (Mouse).